Consider the following 131-residue polypeptide: MAAAVAMETDDAGNRLRFQLELEFVQCLANPNYLNFLAQRGYFKDKAFVNYLKYLLYWKDPEYAKYLKYPQCLHMLELLQYEHFRKELVNAQCAKFIDEQQILHWQHYSRKRMRLQQALAEQQQQNNTSGK.

Ala-2 is modified (N-acetylalanine).

It belongs to the Mediator complex subunit 31 family. Component of the Mediator complex, which is composed of MED1, MED4, MED6, MED7, MED8, MED9, MED10, MED11, MED12, MED13, MED13L, MED14, MED15, MED16, MED17, MED18, MED19, MED20, MED21, MED22, MED23, MED24, MED25, MED26, MED27, MED29, MED30, MED31, CCNC, CDK8 and CDC2L6/CDK11. The MED12, MED13, CCNC and CDK8 subunits form a distinct module termed the CDK8 module. Mediator containing the CDK8 module is less active than Mediator lacking this module in supporting transcriptional activation. Individual preparations of the Mediator complex lacking one or more distinct subunits have been variously termed ARC, CRSP, DRIP, PC2, SMCC and TRAP.

The protein localises to the nucleus. Its function is as follows. Component of the Mediator complex, a coactivator involved in the regulated transcription of nearly all RNA polymerase II-dependent genes. Mediator functions as a bridge to convey information from gene-specific regulatory proteins to the basal RNA polymerase II transcription machinery. Mediator is recruited to promoters by direct interactions with regulatory proteins and serves as a scaffold for the assembly of a functional preinitiation complex with RNA polymerase II and the general transcription factors. The polypeptide is Mediator of RNA polymerase II transcription subunit 31 (MED31) (Homo sapiens (Human)).